We begin with the raw amino-acid sequence, 407 residues long: uncharacterized protein (407 aa).

Disordered stretches follow at residues 1-62 and 350-379; these read MTGR…NGDP and SVTPAAAAPPGVPKPEHGEELEADPWKPSS. The segment covering 17 to 30 has biased composition (basic and acidic residues); it reads PVEKMPRFQREHGA.

This is an uncharacterized protein from Ictaluridae (bullhead catfishes).